Reading from the N-terminus, the 230-residue chain is Porin OmpL (230 aa).

The first 20 residues, 1–20 (MKKINAIILLSSLTSASVFA), serve as a signal peptide directing secretion.

This sequence belongs to the oligogalacturonate-specific porin KdgM (TC 1.B.35) family. OmpL subfamily.

Its subcellular location is the cell outer membrane. In terms of biological role, outer membrane channel protein that allows an efficient diffusion of low-molecular-weight solutes such as small sugars and tetraglycine. However, the specific substrate recognized by the OmpL channel is unknown. This chain is Porin OmpL (ompL), found in Escherichia coli (strain K12).